Here is a 122-residue protein sequence, read N- to C-terminus: Large ribosomal subunit protein uL14 (122 aa).

The protein belongs to the universal ribosomal protein uL14 family. In terms of assembly, part of the 50S ribosomal subunit. Forms a cluster with proteins L3 and L19. In the 70S ribosome, L14 and L19 interact and together make contacts with the 16S rRNA in bridges B5 and B8.

In terms of biological role, binds to 23S rRNA. Forms part of two intersubunit bridges in the 70S ribosome. This Syntrophotalea carbinolica (strain DSM 2380 / NBRC 103641 / GraBd1) (Pelobacter carbinolicus) protein is Large ribosomal subunit protein uL14.